The sequence spans 192 residues: UPF0312 protein PC1_2518 (192 aa).

Residues 1-23 (MLKKTLLSLTAVSMLASAGSALA) form the signal peptide.

The protein belongs to the UPF0312 family. Type 1 subfamily.

Its subcellular location is the periplasm. This chain is UPF0312 protein PC1_2518, found in Pectobacterium carotovorum subsp. carotovorum (strain PC1).